The sequence spans 299 residues: Bifunctional protein FolD (299 aa).

NADP(+) contacts are provided by residues 168 to 170 (GRS), serine 193, and isoleucine 234.

Belongs to the tetrahydrofolate dehydrogenase/cyclohydrolase family. Homodimer.

The catalysed reaction is (6R)-5,10-methylene-5,6,7,8-tetrahydrofolate + NADP(+) = (6R)-5,10-methenyltetrahydrofolate + NADPH. It catalyses the reaction (6R)-5,10-methenyltetrahydrofolate + H2O = (6R)-10-formyltetrahydrofolate + H(+). It participates in one-carbon metabolism; tetrahydrofolate interconversion. In terms of biological role, catalyzes the oxidation of 5,10-methylenetetrahydrofolate to 5,10-methenyltetrahydrofolate and then the hydrolysis of 5,10-methenyltetrahydrofolate to 10-formyltetrahydrofolate. This chain is Bifunctional protein FolD, found in Bartonella bacilliformis (strain ATCC 35685 / KC583 / Herrer 020/F12,63).